The chain runs to 396 residues: MQNMVILGATGSIGASTLSVVACNPEQYKVYALVANTNVAKMLEICIAHQPKIAHMVDAQAAQSLKQQLPSHLDIEVTTGEDELLSLVSSSDVDTVMAAIVGAAGLPSTLAAVNAGKRVLLANKESLVMSGQLFIEAMQKSGAQVLPVDSEHNAIFQCLSERSQLEIGRCDLAGAGVSHILLTGSGGPFLTSDLATLSAMTPEQACKHPNWSMGRKISVDSATMMNKGLEYIEARWLFNASSEQLKVVIHPQSVIHSMVQYRDGSVLAQLGNPDMRTPIAHCMAFPQRINSGVEPLDFFKVGQLSFLEPDFTRFPCLALAIEACKQGQEATTVLNAANEISVQAFLDGKIRFTDIARINEQSLMNTATHPLNSIDDILALDFQSRQSTLDAITKLN.

Positions 10, 11, 12, 13, 38, and 123 each coordinate NADPH. Lys-124 contacts 1-deoxy-D-xylulose 5-phosphate. Position 125 (Glu-125) interacts with NADPH. Residue Asp-149 participates in Mn(2+) binding. Residues Ser-150, Glu-151, Ser-185, and His-208 each contribute to the 1-deoxy-D-xylulose 5-phosphate site. Residue Glu-151 coordinates Mn(2+). Position 214 (Gly-214) interacts with NADPH. Residues Ser-221, Asn-226, Lys-227, and Glu-230 each coordinate 1-deoxy-D-xylulose 5-phosphate. Glu-230 lines the Mn(2+) pocket.

This sequence belongs to the DXR family. Mg(2+) is required as a cofactor. It depends on Mn(2+) as a cofactor.

It catalyses the reaction 2-C-methyl-D-erythritol 4-phosphate + NADP(+) = 1-deoxy-D-xylulose 5-phosphate + NADPH + H(+). It functions in the pathway isoprenoid biosynthesis; isopentenyl diphosphate biosynthesis via DXP pathway; isopentenyl diphosphate from 1-deoxy-D-xylulose 5-phosphate: step 1/6. Catalyzes the NADPH-dependent rearrangement and reduction of 1-deoxy-D-xylulose-5-phosphate (DXP) to 2-C-methyl-D-erythritol 4-phosphate (MEP). The chain is 1-deoxy-D-xylulose 5-phosphate reductoisomerase from Shewanella halifaxensis (strain HAW-EB4).